Consider the following 750-residue polypeptide: Protein psiO (750 aa).

The first 22 residues, 1–22 (MKEKIKLSLLILTSIILAVANS), serve as a signal peptide directing secretion. The Extracellular segment spans residues 23–688 (QTQPKTLAMT…GCNTAAVVST (666 aa)). A glycan (N-linked (GlcNAc...) asparagine) is linked at Asn-129. The PA14 domain maps to 140-286 (QEYFPINGKG…DDYCGVCNGD (147 aa)). 5 N-linked (GlcNAc...) asparagine glycosylation sites follow: Asn-447, Asn-506, Asn-554, Asn-571, and Asn-659. Residues 689–709 (AVIAGVTVAAVVGLGIFLYGG) form a helical membrane-spanning segment. At 710 to 750 (KKGYDYYQDNKSKGMTGANSNPLYKESGNAGQNPLYNDNNL) the chain is on the cytoplasmic side. A disordered region spans residues 727–750 (ANSNPLYKESGNAGQNPLYNDNNL). Residues 738-750 (NAGQNPLYNDNNL) show a composition bias toward polar residues.

This sequence belongs to the prespore-cell-inducing factor family.

It localises to the membrane. The sequence is that of Protein psiO (psiO) from Dictyostelium discoideum (Social amoeba).